The following is a 254-amino-acid chain: Alcohol dehydrogenase 2 (254 aa).

10–33 (FVAGLGGIGFDTSREIVKSGPKNL) contacts NAD(+). Serine 138 serves as a coordination point for substrate. Residue tyrosine 151 is the Proton acceptor of the active site.

Belongs to the short-chain dehydrogenases/reductases (SDR) family. In terms of assembly, homodimer.

The enzyme catalyses a primary alcohol + NAD(+) = an aldehyde + NADH + H(+). The catalysed reaction is a secondary alcohol + NAD(+) = a ketone + NADH + H(+). The sequence is that of Alcohol dehydrogenase 2 (Adh2) from Drosophila buzzatii (Fruit fly).